A 131-amino-acid polypeptide reads, in one-letter code: NADPH-dependent 7-cyano-7-deazaguanine reductase (131 aa).

C47 functions as the Thioimide intermediate in the catalytic mechanism. The active-site Proton donor is the D54. Substrate-binding positions include 69-71 (MEL) and 88-89 (HE).

Belongs to the GTP cyclohydrolase I family. QueF type 1 subfamily.

It is found in the cytoplasm. The catalysed reaction is 7-aminomethyl-7-carbaguanine + 2 NADP(+) = 7-cyano-7-deazaguanine + 2 NADPH + 3 H(+). It functions in the pathway tRNA modification; tRNA-queuosine biosynthesis. In terms of biological role, catalyzes the NADPH-dependent reduction of 7-cyano-7-deazaguanine (preQ0) to 7-aminomethyl-7-deazaguanine (preQ1). The polypeptide is NADPH-dependent 7-cyano-7-deazaguanine reductase (Microcystis aeruginosa (strain NIES-843 / IAM M-2473)).